A 187-amino-acid polypeptide reads, in one-letter code: MLDAATYTPRLKAAYAETIRAAMKEEFGYKNDMMIPRLDKIVLNIGAGAEAVKDSKKAKSAQDDLSAIAGQRAVITKAKKSIAGFRVREDMPLGAKVTLRGDRMYEFLDRLITIAMPRIRDFRGVKGSAFDGRGNYALGLKEHIVFPEINFDKVDEVWGMDIIICTTAASDAEAKALLKHFNMPFNS.

Belongs to the universal ribosomal protein uL5 family. As to quaternary structure, part of the 50S ribosomal subunit; part of the 5S rRNA/L5/L18/L25 subcomplex. Contacts the 5S rRNA and the P site tRNA. Forms a bridge to the 30S subunit in the 70S ribosome.

Its function is as follows. This is one of the proteins that bind and probably mediate the attachment of the 5S RNA into the large ribosomal subunit, where it forms part of the central protuberance. In the 70S ribosome it contacts protein S13 of the 30S subunit (bridge B1b), connecting the 2 subunits; this bridge is implicated in subunit movement. Contacts the P site tRNA; the 5S rRNA and some of its associated proteins might help stabilize positioning of ribosome-bound tRNAs. This is Large ribosomal subunit protein uL5 from Dinoroseobacter shibae (strain DSM 16493 / NCIMB 14021 / DFL 12).